Here is a 220-residue protein sequence, read N- to C-terminus: Urease accessory protein UreE (220 aa).

The segment at 145–220 (EGGAYSAGGH…QIHKRRPDNL (76 aa)) is disordered. The span at 156–177 (HGHDHGSHEHSAHDHGKHDHAP) shows a compositional bias: basic and acidic residues. The segment covering 178–188 (AKPATAATPAA) has biased composition (low complexity). Positions 191–206 (HGPDCNHGHDHAHEAK) are enriched in basic and acidic residues.

Belongs to the UreE family.

It localises to the cytoplasm. In terms of biological role, involved in urease metallocenter assembly. Binds nickel. Probably functions as a nickel donor during metallocenter assembly. This chain is Urease accessory protein UreE, found in Polaromonas sp. (strain JS666 / ATCC BAA-500).